We begin with the raw amino-acid sequence, 251 residues long: uncharacterized protein (251 aa).

Disordered stretches follow at residues 1 to 93, 107 to 152, 169 to 188, and 224 to 251; these read MQPG…ASPG, GLRS…SRPQ, PSSILSAASPGAKLPRVSLS, and LQAQNLPSSGPLQARPRPRPHSGLSTPS. The span at 225–234 shows a compositional bias: polar residues; it reads QAQNLPSSGP.

This is an uncharacterized protein from Homo sapiens (Human).